Here is a 67-residue protein sequence, read N- to C-terminus: Putative ATP synthase subunit epsilon, mitochondrial (67 aa).

Belongs to the eukaryotic ATPase epsilon family. As to quaternary structure, F-type ATPases have 2 components, CF(1) - the catalytic core - and CF(0) - the membrane proton channel. CF(1) has five subunits: alpha(3), beta(3), gamma(1), delta(1), epsilon(1). CF(0) seems to have nine subunits: a, b, c, d, e, f, g, F6 and 8 (or A6L).

It localises to the mitochondrion. The protein resides in the mitochondrion inner membrane. Functionally, mitochondrial membrane ATP synthase (F(1)F(0) ATP synthase or Complex V) produces ATP from ADP in the presence of a proton gradient across the membrane which is generated by electron transport complexes of the respiratory chain. F-type ATPases consist of two structural domains, F(1) - containing the extramembraneous catalytic core, and F(0) - containing the membrane proton channel, linked together by a central stalk and a peripheral stalk. During catalysis, ATP synthesis in the catalytic domain of F(1) is coupled via a rotary mechanism of the central stalk subunits to proton translocation. Part of the complex F(1) domain and of the central stalk which is part of the complex rotary element. Rotation of the central stalk against the surrounding alpha(3)beta(3) subunits leads to hydrolysis of ATP in three separate catalytic sites on the beta subunits. This is Putative ATP synthase subunit epsilon, mitochondrial (atp15) from Schizosaccharomyces pombe (strain 972 / ATCC 24843) (Fission yeast).